The primary structure comprises 212 residues: Adenylate kinase (212 aa).

Residue 10–15 coordinates ATP; it reads GAGKGT. An NMP region spans residues 30–59; that stretch reads STGDMFRAAMANQTEMGRLAKSYIDKGELV. Residues Thr31, Arg36, 57 to 59, 86 to 89, and Gln93 each bind AMP; these read ELV and GYPR. An LID region spans residues 127 to 159; it reads GRIINRKTGETFHKVFNPPVDYKEEDYYQREDD. ATP-binding positions include Arg128 and 137–138; that span reads TF. Residues Arg156 and Arg167 each coordinate AMP. ATP is bound at residue Gln195.

The protein belongs to the adenylate kinase family. As to quaternary structure, monomer.

The protein resides in the cytoplasm. It carries out the reaction AMP + ATP = 2 ADP. It functions in the pathway purine metabolism; AMP biosynthesis via salvage pathway; AMP from ADP: step 1/1. In terms of biological role, catalyzes the reversible transfer of the terminal phosphate group between ATP and AMP. Plays an important role in cellular energy homeostasis and in adenine nucleotide metabolism. This is Adenylate kinase from Streptococcus pyogenes serotype M12 (strain MGAS2096).